Here is a 362-residue protein sequence, read N- to C-terminus: UDP-N-acetylglucosamine--N-acetylmuramyl-(pentapeptide) pyrophosphoryl-undecaprenol N-acetylglucosamine transferase (362 aa).

Residues 15-17, N127, R165, S191, I247, 266-271, and Q292 contribute to the UDP-N-acetyl-alpha-D-glucosamine site; these read TGG and ALTVSE.

Belongs to the glycosyltransferase 28 family. MurG subfamily.

It localises to the cell inner membrane. It catalyses the reaction di-trans,octa-cis-undecaprenyl diphospho-N-acetyl-alpha-D-muramoyl-L-alanyl-D-glutamyl-meso-2,6-diaminopimeloyl-D-alanyl-D-alanine + UDP-N-acetyl-alpha-D-glucosamine = di-trans,octa-cis-undecaprenyl diphospho-[N-acetyl-alpha-D-glucosaminyl-(1-&gt;4)]-N-acetyl-alpha-D-muramoyl-L-alanyl-D-glutamyl-meso-2,6-diaminopimeloyl-D-alanyl-D-alanine + UDP + H(+). The protein operates within cell wall biogenesis; peptidoglycan biosynthesis. In terms of biological role, cell wall formation. Catalyzes the transfer of a GlcNAc subunit on undecaprenyl-pyrophosphoryl-MurNAc-pentapeptide (lipid intermediate I) to form undecaprenyl-pyrophosphoryl-MurNAc-(pentapeptide)GlcNAc (lipid intermediate II). The protein is UDP-N-acetylglucosamine--N-acetylmuramyl-(pentapeptide) pyrophosphoryl-undecaprenol N-acetylglucosamine transferase of Shewanella putrefaciens (strain CN-32 / ATCC BAA-453).